The following is a 405-amino-acid chain: Arginine biosynthesis bifunctional protein ArgJ (405 aa).

6 residues coordinate substrate: Thr152, Lys178, Thr189, Glu276, Asn400, and Thr405. Thr189 serves as the catalytic Nucleophile.

The protein belongs to the ArgJ family. In terms of assembly, heterotetramer of two alpha and two beta chains.

The protein resides in the cytoplasm. It carries out the reaction N(2)-acetyl-L-ornithine + L-glutamate = N-acetyl-L-glutamate + L-ornithine. The catalysed reaction is L-glutamate + acetyl-CoA = N-acetyl-L-glutamate + CoA + H(+). Its pathway is amino-acid biosynthesis; L-arginine biosynthesis; L-ornithine and N-acetyl-L-glutamate from L-glutamate and N(2)-acetyl-L-ornithine (cyclic): step 1/1. The protein operates within amino-acid biosynthesis; L-arginine biosynthesis; N(2)-acetyl-L-ornithine from L-glutamate: step 1/4. Catalyzes two activities which are involved in the cyclic version of arginine biosynthesis: the synthesis of N-acetylglutamate from glutamate and acetyl-CoA as the acetyl donor, and of ornithine by transacetylation between N(2)-acetylornithine and glutamate. This Pseudomonas putida (strain ATCC 47054 / DSM 6125 / CFBP 8728 / NCIMB 11950 / KT2440) protein is Arginine biosynthesis bifunctional protein ArgJ.